The sequence spans 193 residues: Pyridoxal 5'-phosphate synthase subunit PdxT (193 aa).

50 to 52 (GES) provides a ligand contact to L-glutamine. Cys82 serves as the catalytic Nucleophile. Residues Arg109 and 136-137 (IR) each bind L-glutamine. Residues His172 and Glu174 each act as charge relay system in the active site.

This sequence belongs to the glutaminase PdxT/SNO family. As to quaternary structure, in the presence of PdxS, forms a dodecamer of heterodimers. Only shows activity in the heterodimer.

It carries out the reaction aldehydo-D-ribose 5-phosphate + D-glyceraldehyde 3-phosphate + L-glutamine = pyridoxal 5'-phosphate + L-glutamate + phosphate + 3 H2O + H(+). The enzyme catalyses L-glutamine + H2O = L-glutamate + NH4(+). It functions in the pathway cofactor biosynthesis; pyridoxal 5'-phosphate biosynthesis. In terms of biological role, catalyzes the hydrolysis of glutamine to glutamate and ammonia as part of the biosynthesis of pyridoxal 5'-phosphate. The resulting ammonia molecule is channeled to the active site of PdxS. This Streptococcus pneumoniae serotype 2 (strain D39 / NCTC 7466) protein is Pyridoxal 5'-phosphate synthase subunit PdxT.